The following is a 244-amino-acid chain: Probable transcriptional regulatory protein Xfasm12_1059 (244 aa).

It belongs to the TACO1 family.

The protein localises to the cytoplasm. This chain is Probable transcriptional regulatory protein Xfasm12_1059, found in Xylella fastidiosa (strain M12).